The chain runs to 223 residues: DNA-directed RNA polymerase III subunit RPC7 (223 aa).

Residues 110 to 223 form a disordered region; that stretch reads MMPRNKCKKA…SDDNMDEATY (114 aa). A compositionally biased stretch (basic residues) spans 114-125; that stretch reads NKCKKAGPKPKK. Thr-133 bears the Phosphothreonine mark. The segment covering 140–155 has biased composition (basic and acidic residues); sequence DVLKKMEELEKRGDGE. Ser-157 is subject to Phosphoserine. Residues 164–173 show a composition bias toward basic and acidic residues; the sequence is KEGSKEKSKE. Composition is skewed to acidic residues over residues 174-198 and 205-223; these read GDDDDDDDAAEQEEYDEEEQEEEND and EDGDDFGADSDDNMDEATY.

The protein belongs to the eukaryotic RPC7 RNA polymerase subunit family. Component of the RNA polymerase III complex consisting of 17 subunits: a ten-subunit horseshoe-shaped catalytic core composed of POLR3A/RPC1, POLR3B/RPC2, POLR1C/RPAC1, POLR1D/RPAC2, POLR3K/RPC10, POLR2E/RPABC1, POLR2F/RPABC2, POLR2H/RPABC3, POLR2K/RPABC4 and POLR2L/RPABC5; a mobile stalk composed of two subunits POLR3H/RPC8 and CRCP/RPC9, protruding from the core and functioning primarily in transcription initiation; and additional subunits homologous to general transcription factors of the RNA polymerase II machinery, POLR3C/RPC3-POLR3F/RPC6-POLR3G/RPC7 heterotrimer required for transcription initiation and POLR3D/RPC4-POLR3E/RPC5 heterodimer involved in both transcription initiation and termination. Directly interacts with POLR3C/RPC62. Also found in a trimeric complex with POLR3C/RPC3 and POLR3GL. As to expression, barely detectable in differentiated tissues. Expressed in embryonic stem cells and in other dividing cells, such as some tumor cell lines.

It localises to the nucleus. The protein localises to the cytoplasm. Functionally, DNA-dependent RNA polymerase catalyzes the transcription of DNA into RNA using the four ribonucleoside triphosphates as substrates. Specific peripheric component of RNA polymerase III (Pol III) which synthesizes small non-coding RNAs including 5S rRNA, snRNAs, tRNAs and miRNAs from at least 500 distinct genomic loci. Acts as a long tether that bridges POLR3C/RPC3-POLR3F/RPC6-POLR3G/RPC7 heterotrimer and the mobile stalk of Pol III, coordinating the dynamics of Pol III stalk and clamp modules during the transition from apo to elongation state. Pol III exists as two alternative complexes defined by the mutually exclusive incorporation of subunit POLR3G/RPC7alpha or POLR3GL/RPC7beta. POLR3G/RPC7alpha modulates Pol III transcriptome by specifically enhancing the transcription of snaR-A non-coding RNAs. At resting state, occupies the active site of apo Pol III and keeps Pol III in an autoinhibitory mode, preventing non-specific transcription. Pol III plays a key role in sensing and limiting infection by intracellular bacteria and DNA viruses. Acts as a nuclear and cytosolic DNA sensor involved in innate immune response. Can sense non-self dsDNA that serves as template for transcription into dsRNA. The non-self RNA polymerase III transcripts, such as Epstein-Barr virus-encoded RNAs (EBERs), induce type I interferon and NF-kappa-B through the RIG-I pathway. In Homo sapiens (Human), this protein is DNA-directed RNA polymerase III subunit RPC7.